The following is a 272-amino-acid chain: PILR alpha-associated neural protein (272 aa).

Positions 1 to 27 are cleaved as a signal peptide; the sequence is MWPAQLLSQLLPLWPLLLLPLSLPAQG. Residues 25–93 form a disordered region; the sequence is AQGSSHRSPP…PSGFEEGPPS (69 aa). Over 28 to 174 the chain is Extracellular; sequence SSHRSPPAPA…FGGRGEGVDP (147 aa). O-linked (GalNAc...) threonine glycosylation is present at Thr136. A helical membrane pass occupies residues 175–195; that stretch reads QLYVTITISIIIVLVATGIIF. Residues 196–272 are Cytoplasmic-facing; that stretch reads KFCWDRSQKR…KGAPAFQLNR (77 aa). The interval 205-272 is disordered; that stretch reads RRRPSGQQGA…KGAPAFQLNR (68 aa). The segment covering 209–225 has biased composition (polar residues); it reads SGQQGALRQEESQQPLT.

In terms of processing, O-glycosylation at Thr-136 is essential for recognition by PILRA.

It localises to the membrane. Its function is as follows. Acts as a ligand for PILRA in neuronal tissues, where it may be involved in immune regulation. The sequence is that of PILR alpha-associated neural protein (Pianp) from Rattus norvegicus (Rat).